The following is a 294-amino-acid chain: Cytidine deaminase (294 aa).

2 consecutive CMP/dCMP-type deaminase domains span residues 48–168 (DEDA…FGPK) and 186–294 (LTGD…VLLG). Position 89–91 (89–91 (NME)) interacts with substrate. H102 is a Zn(2+) binding site. E104 acts as the Proton donor in catalysis. Residues C129 and C132 each coordinate Zn(2+).

Belongs to the cytidine and deoxycytidylate deaminase family. Homodimer. Zn(2+) is required as a cofactor.

It catalyses the reaction cytidine + H2O + H(+) = uridine + NH4(+). The catalysed reaction is 2'-deoxycytidine + H2O + H(+) = 2'-deoxyuridine + NH4(+). In terms of biological role, this enzyme scavenges exogenous and endogenous cytidine and 2'-deoxycytidine for UMP synthesis. The chain is Cytidine deaminase from Salmonella arizonae (strain ATCC BAA-731 / CDC346-86 / RSK2980).